Here is an 81-residue protein sequence, read N- to C-terminus: MKTLLLTLVVVTIVCLDLGYTLKCNKLVPLFYKTCPAGKNLCYKMFMVAMPKVPVKRGCIDVCPKSSLLVKYVCCNTDRCN.

Positions methionine 1–threonine 21 are cleaved as a signal peptide. 4 disulfide bridges follow: cysteine 24–cysteine 42, cysteine 35–cysteine 59, cysteine 63–cysteine 74, and cysteine 75–cysteine 80.

This sequence belongs to the three-finger toxin family. Short-chain subfamily. Type IA cytotoxin sub-subfamily. Monomer in solution; Homodimer and oligomer in the presence of negatively charged lipids forming a pore with a size ranging between 20 and 30 Angstroms. As to expression, expressed by the venom gland.

It is found in the secreted. Its subcellular location is the target cell membrane. In terms of biological role, shows cytolytic activity on many different cells by forming pore in lipid membranes. In vivo, increases heart rate or kills the animal by cardiac arrest. In addition, it binds to heparin with high affinity, interacts with Kv channel-interacting protein 1 (KCNIP1) in a calcium-independent manner, and binds to integrin alpha-V/beta-3 (ITGAV/ITGB3) with moderate affinity. This chain is Cytotoxin 4a, found in Naja sputatrix (Malayan spitting cobra).